Here is a 393-residue protein sequence, read N- to C-terminus: Cytohesin-4 (393 aa).

Residues 13–56 (SGEAKELQQIKWHRKQLLEDIQKLKDEIADVFAQIDCFESTEES) are a coiled coil. The region spanning 54–241 (EESRMAQKEK…RNLFDSIKSE (188 aa)) is the SEC7 domain. A PH domain is found at 259–375 (NPDREGWLLK…WIEAIRASIT (117 aa)). Residues 268–275 (KLGGRVKT), arginine 279, tyrosine 290, and arginine 300 each bind a 1,2-diacyl-sn-glycero-3-phospho-(1D-myo-inositol-3,4,5-trisphosphate). The tract at residues 386 to 393 (RKKKIVGK) is C-terminal autoinhibitory region.

It is found in the cell membrane. In terms of biological role, promotes guanine-nucleotide exchange on ARF1 and ARF5. Promotes the activation of ARF factors through replacement of GDP with GTP. In Mus musculus (Mouse), this protein is Cytohesin-4 (Cyth4).